Reading from the N-terminus, the 2513-residue chain is Polyprotein P1234 (2513 aa).

Residues 28 to 259 (EPKQVTPNDH…ESRKLLQSWH (232 aa)) form the Alphavirus-like MT domain. The nsP1 membrane-binding stretch occupies residues 244–263 (GSTLYPESRKLLQSWHLPSV). 2 S-palmitoyl cysteine; by host lipidation sites follow: Cys-417 and Cys-419. The region spanning 690 to 842 (DLTSPPYHEF…HNICTQVYHK (153 aa)) is the (+)RNA virus helicase ATP-binding domain. 721–728 (GVPGSGKS) contributes to the a ribonucleoside 5'-triphosphate binding site. The (+)RNA virus helicase C-terminal domain occupies 843 to 991 (SISRRCTLPV…IKEWEAEHAS (149 aa)). In terms of domain architecture, Peptidase C9 spans 1004 to 1327 (DTFQNKANVC…NQLNAVYAGL (324 aa)). Residues 1005–1024 (TFQNKANVCWAKCLVPILDT) form a nucleolus localization signal region. Cys-1013 serves as the catalytic For cysteine protease nsP2 activity. The short motif at 1058 to 1067 (TRIYGVDLDS) is the Nuclear export signal element. The active-site For cysteine protease nsP2 activity is His-1083. The Nuclear localization signal motif lies at 1182–1186 (PTKRV). ADP-D-ribose contacts are provided by Asp-1343, Asn-1357, Gly-1365, Gly-1445, Val-1446, and Tyr-1447. 4 residues coordinate Zn(2+): Cys-1595, Cys-1597, Cys-1620, and Cys-1638. Short sequence motifs (FGDF; binding to host G3BP1) lie at residues 1851 to 1854 (FGDF) and 1869 to 1872 (FGDF). Positions 2267–2382 (DAVLETDIAS…HGVVSDALMA (116 aa)) constitute a RdRp catalytic domain.

As to quaternary structure, interacts with non-structural protein 3. Interacts with RNA-directed RNA polymerase nsP4. Interacts with protease nsP2. interacts with itself. Interacts with mRNA-capping enzyme nsP1. Interacts with host DDX1. Interacts with host DDX3. Interacts (via C-terminus) with host G3BP1; this interaction inhibits the formation of host stress granules on viral mRNAs and the nsp3-G3BP1 complexes bind viral RNAs and probably orchestrate the assembly of viral replication complexes. Interacts (via C-terminus) with host G3BP2; this interaction inhibits the formation of host stress granules on viral mRNAs and the nsp3-G3BP2 complexes bind viral RNAs and probably orchestrate the assembly of viral replication complexes. In terms of assembly, interacts with mRNA-capping enzyme nsP1. Interacts with protease nsP2. interacts with itself. As to quaternary structure, interacts with RNA-directed RNA polymerase nsP4. Interacts with mRNA-capping enzyme nsP1. Interacts with KPNA1/karyopherin-alpha1; this interaction probably allows the active transport of protease nsP2 into the host nucleus. Requires Mg(2+) as cofactor. It depends on Mn(2+) as a cofactor. Specific enzymatic cleavages in vivo yield mature proteins. The processing of the polyprotein is temporally regulated. In early stages (1.7 hpi), P1234 is first cleaved in trans through its nsP2 protease activity, releasing P123 and nsP4, which associate to form the early replication complex. At the same time, P1234 is also cut at the nsP1/nsP2 site early in infection but with lower efficiency. After replication of the viral minus-strand RNAs (4 hpi), the polyproteins are cut at the nsP1/nsP2 and nsP2/nsP3 sites very efficiently, preventing accumulation of P123 and P1234 and allowing the formation of the late replication complex. NsP3/nsP4 site is not cleaved anymore and P34 is produced rather than nsP4. Post-translationally, specific enzymatic cleavages in vivo yield mature proteins. The processing of the polyprotein is temporally regulated. In early stages (1.7 hpi), P123 is cleaved at the nsP1/nsP2 site with low efficiency. After replication of the viral minus-strand RNAs (4 hpi), the polyproteins are cut at the nsP1/nsP2 and nsP2/nsP3 sites very efficiently, preventing accumulation of P123 and allowing the formation of the late replication complex. In terms of processing, palmitoylated by host palmitoyltransferases ZDHHC2 and ZDHHC19. Phosphorylated by host on serines and threonines. Post-translationally, ubiquitinated; targets the protein for rapid degradation via the ubiquitin system. Nsp4 is present in extremely low quantities due to low frequency of translation through the amber stop-codon and the degradation by the ubiquitin pathway.

It localises to the host cytoplasmic vesicle membrane. The protein localises to the host cell membrane. Its subcellular location is the host cell projection. It is found in the host filopodium. The protein resides in the host nucleus. It localises to the host cytoplasm. The catalysed reaction is GTP + S-adenosyl-L-methionine = N(7)-methyl-GTP + S-adenosyl-L-homocysteine. The enzyme catalyses N(7)-methyl-GTP + L-histidyl-[protein] = N(tele)-(N(7)-methylguanosine 5'-phospho)-L-histidyl-[protein] + diphosphate. It catalyses the reaction N(tele)-(N(7)-methylguanosine 5'-phospho)-L-histidyl-[protein] + a 5'-end diphospho-(purine-ribonucleoside) in mRNA + H(+) = a 5'-end (N(7)-methyl 5'-triphosphoguanosine)-(purine-ribonucleoside) in mRNA + L-histidyl-[protein]. It carries out the reaction a 5'-end triphospho-ribonucleoside in mRNA + H2O = a 5'-end diphospho-ribonucleoside in mRNA + phosphate + H(+). The catalysed reaction is a ribonucleoside 5'-triphosphate + H2O = a ribonucleoside 5'-diphosphate + phosphate + H(+). The enzyme catalyses ATP + H2O = ADP + phosphate + H(+). It catalyses the reaction RNA(n) + a ribonucleoside 5'-triphosphate = RNA(n+1) + diphosphate. It carries out the reaction 4-O-(ADP-D-ribosyl)-L-aspartyl-[protein] + H2O = L-aspartyl-[protein] + ADP-D-ribose + H(+). The catalysed reaction is 5-O-(ADP-D-ribosyl)-L-glutamyl-[protein] + H2O = L-glutamyl-[protein] + ADP-D-ribose + H(+). The enzyme catalyses RNA(n) + ATP = RNA(n)-3'-adenine ribonucleotide + diphosphate. It catalyses the reaction ADP-alpha-D-ribose 1''-phosphate + H2O = ADP-D-ribose + phosphate. Functionally, inactive precursor of the viral replicase, which is activated by cleavages carried out by the viral protease nsP2. In terms of biological role, the early replication complex formed by the polyprotein P123 and nsP4 synthesizes minus-strand RNAs. As soon P123 is cleaved into mature proteins, the plus-strand RNAs synthesis begins. Cytoplasmic capping enzyme that catalyzes two virus-specific reactions: methyltransferase and nsP1 guanylyltransferase. mRNA-capping is necessary since all viral RNAs are synthesized in the cytoplasm, and host capping enzymes are restricted to the nucleus. The enzymatic reaction involves a covalent link between 7-methyl-GMP and nsP1, whereas eukaryotic capping enzymes form a covalent complex only with GMP. nsP1 capping consists in the following reactions: GTP is first methylated into 7-methyl-GMP and then is covalently linked to nsP1 to form the m7GMp-nsP1 complex from which 7-methyl-GMP complex is transferred to the mRNA to create the cap structure. NsP1 is also needed for the initiation of the minus-strand RNAs synthesis. Probably serves as a membrane anchor for the replication complex composed of nsP1-nsP4. Palmitoylated nsP1 is remodeling host cell cytoskeleton, and induces filopodium-like structure formation at the surface of the host cell. Its function is as follows. Multifunctional protein whose N-terminus is part of the RNA polymerase complex and displays NTPase, RNA triphosphatase and helicase activities. NTPase and RNA triphosphatase are involved in viral RNA capping and helicase keeps a check on the dsRNA replication intermediates. The C-terminus harbors a protease that specifically cleaves the polyproteins and releases the mature proteins. Required for the shutoff of minus-strand RNAs synthesis. Specifically inhibits the host IFN response by promoting the nuclear export of host STAT1. Also inhibits host transcription by inducing the rapid proteasome-dependent degradation of POLR2A, a catalytic subunit of the RNAPII complex. The resulting inhibition of cellular protein synthesis serves to ensure maximal viral gene expression and to evade host immune response. Functionally, seems to be essential for minus-strand RNAs and subgenomic 26S mRNAs synthesis. Displays mono-ADP-ribosylhydrolase activity. ADP-ribosylation is a post-translational modification that controls various processes of the host cell and the virus probably needs to revert it for optimal viral replication. Binds proteins of G3BP family and sequesters them into the viral RNA replication complexes thereby inhibiting the formation of host stress granules on viral mRNAs. The nsp3-G3BP complexes bind viral RNAs and probably orchestrate the assembly of viral replication complexes, thanks to the ability of G3BP family members to self-assemble and bind DNA. In terms of biological role, RNA dependent RNA polymerase. Replicates genomic and antigenomic RNA by recognizing replications specific signals. The early replication complex formed by the polyprotein P123 and nsP4 synthesizes minus-strand RNAs. The late replication complex composed of fully processed nsP1-nsP4 is responsible for the production of genomic and subgenomic plus-strand RNAs. This Anopheles (Human) protein is Polyprotein P1234.